A 144-amino-acid polypeptide reads, in one-letter code: Gas vesicle protein I1 (144 aa).

The interval 1 to 144 (MSDKQQQKHK…SPTEDEVNDE (144 aa)) is disordered. 2 stretches are compositionally biased toward basic residues: residues 7–17 (QKHKQKARQAR) and 26–46 (KARR…TRNR). Residues 75-94 (MPPQKSNAENAVRNSHSTVP) are compositionally biased toward polar residues. Residues 122–136 (SEASAPSDESASGSP) are compositionally biased toward low complexity.

The protein belongs to the gas vesicle GvpI family. In terms of assembly, gvpF to GvpM interact with each other in vitro, and may form multi-subunit complex(es). Interacts with GvpC1 and GvpO.

It localises to the gas vesicle. Functionally, proteins GvpF to GvpM might be involved in nucleating gas vesicle formation. A minor component of the gas vesicle. Gas vesicles are hollow, gas filled proteinaceous nanostructures found in several microbial planktonic microorganisms. They allow positioning of halobacteria at the optimal depth for growth in the poorly aerated, shallow brine pools of their habitat. Its function is as follows. Expression of a 9.5 kb p-vac DNA fragment containing 2 divergently transcribed regions (gvpD-gvpE-gvpF-gvpG-gvpH-gvpI-gvpJ-gvpK-gvpL-gvpM and gvpA-gvpC-gvpN-gvpO) allows H.volcanii to produce gas vesicles. A similar region restores gas vesicle production in H.halobium without the p-vac locus, but it still has the c-vac locus. The sequence is that of Gas vesicle protein I1 (gvpI11) from Halobacterium salinarum (strain ATCC 700922 / JCM 11081 / NRC-1) (Halobacterium halobium).